The following is a 438-amino-acid chain: Putative pectate lyase 14 (438 aa).

Positions 1-26 (MVVARTLFSISATLIIFLALFLHVNA) are cleaved as a signal peptide. N-linked (GlcNAc...) asparagine glycans are attached at residues N40, N46, and N73. D236, D260, and D264 together coordinate Ca(2+). The active site involves R316.

This sequence belongs to the polysaccharide lyase 1 family. It depends on Ca(2+) as a cofactor.

The catalysed reaction is Eliminative cleavage of (1-&gt;4)-alpha-D-galacturonan to give oligosaccharides with 4-deoxy-alpha-D-galact-4-enuronosyl groups at their non-reducing ends.. It functions in the pathway glycan metabolism; pectin degradation; 2-dehydro-3-deoxy-D-gluconate from pectin: step 2/5. The sequence is that of Putative pectate lyase 14 from Arabidopsis thaliana (Mouse-ear cress).